The sequence spans 80 residues: uncharacterized protein (80 aa).

The signal sequence occupies residues 1-15 (MVKLSFTLRFGDVWV).

This is an uncharacterized protein from Archaeoglobus fulgidus (strain ATCC 49558 / DSM 4304 / JCM 9628 / NBRC 100126 / VC-16).